The primary structure comprises 235 residues: MNGVFDLGGTDGIGPVDPPAEEPVFRADWEKAAFTMFSALFRAGWFGIDEFRHGVEKMDPALYLKSPYYKHWIASFEYHGKRTGKLDLAELDRRTQYYLANPDAPLPEHGPNQELIDFANAVVPSGAPAIRPTDKEPRFKIGDVVRMSSDVPFGHTRIAGYVRGKVGRVISHHGSFVYPDSAGNGRGDDPQHLYTLQFDATELWGEQYAEPNVTTTFDAWDPYLTLVTAPEGAAA.

Belongs to the nitrile hydratase subunit beta family. As to quaternary structure, heterodimer of an alpha and a beta chain.

It carries out the reaction an aliphatic primary amide = an aliphatic nitrile + H2O. Functionally, NHase catalyzes the hydration of various nitrile compounds to the corresponding amides. The chain is Nitrile hydratase subunit beta (nthB) from Rhodococcus sp.